We begin with the raw amino-acid sequence, 203 residues long: dITP/XTP pyrophosphatase (203 aa).

Substrate is bound at residue 9-14 (SSNAGK). E42 and D72 together coordinate Mg(2+). The active-site Proton acceptor is the D72. Substrate-binding positions include S73, 161–164 (FGYD), K184, and 189–190 (HR).

This sequence belongs to the HAM1 NTPase family. Homodimer. The cofactor is Mg(2+).

The enzyme catalyses XTP + H2O = XMP + diphosphate + H(+). It carries out the reaction dITP + H2O = dIMP + diphosphate + H(+). The catalysed reaction is ITP + H2O = IMP + diphosphate + H(+). Functionally, pyrophosphatase that catalyzes the hydrolysis of nucleoside triphosphates to their monophosphate derivatives, with a high preference for the non-canonical purine nucleotides XTP (xanthosine triphosphate), dITP (deoxyinosine triphosphate) and ITP. Seems to function as a house-cleaning enzyme that removes non-canonical purine nucleotides from the nucleotide pool, thus preventing their incorporation into DNA/RNA and avoiding chromosomal lesions. The sequence is that of dITP/XTP pyrophosphatase from Acidobacterium capsulatum (strain ATCC 51196 / DSM 11244 / BCRC 80197 / JCM 7670 / NBRC 15755 / NCIMB 13165 / 161).